Reading from the N-terminus, the 883-residue chain is Serine/threonine-protein kinase greatwall (883 aa).

Residue M1 is modified to N-acetylmethionine. In terms of domain architecture, Protein kinase spans 35-839; the sequence is FTIVKPISRG…IKELKCHPLF (805 aa). Residues 41 to 49 and K62 each bind ATP; that span reads ISRGAFGKV. D156 (proton acceptor) is an active-site residue. Residues T209 and T224 each carry the phosphothreonine modification. Residues S295, S373, and S456 each carry the phosphoserine modification. Position 523 is a phosphothreonine (T523). S555, S559, S634, S661, and S672 each carry phosphoserine. T726 is subject to Phosphothreonine. Phosphoserine is present on S729. Phosphothreonine; by CDK1 is present on T745. The region spanning 840 to 883 is the AGC-kinase C-terminal domain; sequence SDVDWENLQHQTMPFIPQPDDETDTSYFEARNNAQHLTVSGFSL. A phosphoserine mark is found at S879 and S882.

This sequence belongs to the protein kinase superfamily. AGC Ser/Thr protein kinase family. In terms of processing, phosphorylation at Thr-745 by CDK1 during M phase activates its kinase activity. Maximum phosphorylation occurs in prometaphase.

It is found in the cytoplasm. The protein resides in the cytoskeleton. It localises to the microtubule organizing center. The protein localises to the centrosome. Its subcellular location is the nucleus. The catalysed reaction is L-seryl-[protein] + ATP = O-phospho-L-seryl-[protein] + ADP + H(+). It carries out the reaction L-threonyl-[protein] + ATP = O-phospho-L-threonyl-[protein] + ADP + H(+). Its function is as follows. Serine/threonine kinase that plays a key role in M phase by acting as a regulator of mitosis entry and maintenance. Acts by promoting the inactivation of protein phosphatase 2A (PP2A) during M phase: does not directly inhibit PP2A but acts by mediating phosphorylation and subsequent activation of ARPP19 and ENSA at 'Ser-62' and 'Ser-67', respectively. ARPP19 and ENSA are phosphatase inhibitors that specifically inhibit the PPP2R2D (PR55-delta) subunit of PP2A. Inactivation of PP2A during M phase is essential to keep cyclin-B1-CDK1 activity high. Following DNA damage, it is also involved in checkpoint recovery by being inhibited. The polypeptide is Serine/threonine-protein kinase greatwall (MASTL) (Canis lupus familiaris (Dog)).